A 381-amino-acid polypeptide reads, in one-letter code: tRNA pseudouridine synthase D (381 aa).

Residue D81 is the Nucleophile of the active site. The TRUD domain maps to G160–V335.

It belongs to the pseudouridine synthase TruD family.

It carries out the reaction uridine(13) in tRNA = pseudouridine(13) in tRNA. In terms of biological role, responsible for synthesis of pseudouridine from uracil-13 in transfer RNAs. This chain is tRNA pseudouridine synthase D, found in Helicobacter pylori (strain G27).